The primary structure comprises 429 residues: Neuronal pentraxin-2 (429 aa).

The first 14 residues, 1-14 (MLALLTVGVALAVA), serve as a signal peptide directing secretion. 2 N-linked (GlcNAc...) asparagine glycosylation sites follow: Asn146 and Asn187. In terms of domain architecture, Pentraxin (PTX) spans 221 to 422 (DAFKVSLPLR…GASKWPVETC (202 aa)). Cys251 and Cys311 form a disulfide bridge. Asn275, Glu353, Gln354, Asp355, and Gln365 together coordinate Ca(2+). Asn391 is a glycosylation site (N-linked (GlcNAc...) asparagine).

As to quaternary structure, homooligomer or heterooligomer (probably pentamer) with neuronal pentraxin receptor (NPTXR). The cofactor is Ca(2+).

The protein resides in the secreted. In terms of biological role, likely to play role in the modification of cellular properties that underlie long-term plasticity. Binds to agar matrix in a calcium-dependent manner. The polypeptide is Neuronal pentraxin-2 (Nptx2) (Mus musculus (Mouse)).